A 219-amino-acid chain; its full sequence is ER lumen protein-retaining receptor (219 aa).

Over 1–5 (MNPFR) the chain is Lumenal. Residues 6-26 (ILGDLSHLTSILILIHNIKTT) traverse the membrane as a helical segment. At 27–37 (RYIEGISFKTQ) the chain is on the cytoplasmic side. Transmembrane regions (helical) follow at residues 38–58 (TLYALVFITRYLDLLTFHWVS) and 59–79 (LYNALMKIFFIVSTAYIVVLL). Over 80 to 98 (QGSKRTNTIAYNEMLMHDT) the chain is Cytoplasmic. Residues 99 to 116 (FKIQHLLIGSALMSVFFH) traverse the membrane as a helical segment. Residues 117-118 (HK) are Lumenal-facing. The chain crosses the membrane as a helical span at residues 119–139 (FTFLELAWSFSVWLESVAILP). At 140-152 (QLYMLSKGGKTRS) the chain is on the cytoplasmic side. Residues 153 to 173 (LTVHYIFAMGLYRALYIPNWI) traverse the membrane as a helical segment. At 174–185 (WRYSTEDKKLDK) the chain is on the lumenal side. A helical membrane pass occupies residues 186-206 (IAFFAGLLQTLLYSDFFYIYY). Topologically, residues 207-219 (TKVIRGKGFKLPK) are cytoplasmic.

This sequence belongs to the ERD2 family.

It is found in the endoplasmic reticulum membrane. Its function is as follows. Required for the retention of luminal endoplasmic reticulum proteins. Determines the specificity of the luminal ER protein retention system. Also required for normal vesicular traffic through the Golgi. This receptor strongly recognizes H-D-E-L and weakly recognizes D-D-E-L and K-D-E-L. The chain is ER lumen protein-retaining receptor from Saccharomyces cerevisiae (strain ATCC 204508 / S288c) (Baker's yeast).